The following is a 288-amino-acid chain: Large ribosomal subunit protein uL2 (288 aa).

The span at 29-43 (PEKSLTRGFKRDKGR) shows a compositional bias: basic and acidic residues. Disordered stretches follow at residues 29-59 (PEKS…GGHK) and 210-288 (GRNR…GRQS). Composition is skewed to basic residues over residues 210 to 221 (GRNRWKGRRPKV) and 272 to 288 (VRRR…GRQS).

It belongs to the universal ribosomal protein uL2 family. In terms of assembly, part of the 50S ribosomal subunit. Forms a bridge to the 30S subunit in the 70S ribosome.

Functionally, one of the primary rRNA binding proteins. Required for association of the 30S and 50S subunits to form the 70S ribosome, for tRNA binding and peptide bond formation. It has been suggested to have peptidyltransferase activity; this is somewhat controversial. Makes several contacts with the 16S rRNA in the 70S ribosome. This is Large ribosomal subunit protein uL2 from Thermosynechococcus vestitus (strain NIES-2133 / IAM M-273 / BP-1).